Consider the following 156-residue polypeptide: Transcription antitermination protein NusB (156 aa).

This sequence belongs to the NusB family.

In terms of biological role, involved in transcription antitermination. Required for transcription of ribosomal RNA (rRNA) genes. Binds specifically to the boxA antiterminator sequence of the ribosomal RNA (rrn) operons. This chain is Transcription antitermination protein NusB, found in Bartonella quintana (strain Toulouse) (Rochalimaea quintana).